The chain runs to 914 residues: Zinc finger protein 717 (914 aa).

A KRAB domain is found at 22-93 (VSFEEVAVHF…EETPNLRLSA (72 aa)). Residues 209–231 (FQCNEQGKTFNTEAMFFIHKRVH) form a C2H2-type 1; degenerate zinc finger. The C2H2-type 2; degenerate zinc finger occupies 266–277 (RKSDFTKHQQTH). Residues 283-305 (YECVECEKPSISKSDLMLQCKMP) form a C2H2-type 3; degenerate zinc finger. C2H2-type zinc fingers lie at residues 311-333 (YACN…QRIH), 339-361 (YGCN…ERTH), 367-389 (YKCI…HRTH), 395-417 (YQCS…HRTH), 423-445 (YACD…QRTH), 451-473 (YECN…QRTH), 479-501 (YECN…QWTH), 507-529 (YECN…QRTH), 535-557 (YACN…HRTH), 563-585 (YECN…QRTH), 591-613 (YECN…KRTH), and 619-641 (YECN…QGTH). The segment at 649–669 (CNECGKTFHRKSFLTIHQRTH) adopts a C2H2-type 16; degenerate zinc-finger fold. The C2H2-type 17; degenerate zinc finger occupies 741–752 (QKSVLTVHHRTH). 5 C2H2-type zinc fingers span residues 758–780 (YECN…QGTH), 786–808 (YECD…QRTH), 814–836 (FECK…HRTH), 842–864 (FRCN…QRTH), and 870–892 (YECK…QQTH).

Belongs to the krueppel C2H2-type zinc-finger protein family.

Its subcellular location is the nucleus. May be involved in transcriptional regulation. The polypeptide is Zinc finger protein 717 (Homo sapiens (Human)).